The chain runs to 453 residues: Acid phosphatase (453 aa).

Positions 1-18 (MFLQNLFLGFLAVVCANA) are cleaved as a signal peptide. His-69 acts as the Nucleophile in catalysis. Residues Asn-95, Asn-151, Asn-183, Asn-193, Asn-243, and Asn-319 are each glycosylated (N-linked (GlcNAc...) asparagine). The active-site Proton donor is the Asp-331. N-linked (GlcNAc...) asparagine glycans are attached at residues Asn-410, Asn-429, and Asn-443.

It belongs to the histidine acid phosphatase family.

The protein localises to the secreted. Its subcellular location is the cell wall. The enzyme catalyses a phosphate monoester + H2O = an alcohol + phosphate. In Schizosaccharomyces pombe (strain 972 / ATCC 24843) (Fission yeast), this protein is Acid phosphatase (pho1).